The primary structure comprises 1005 residues: Retinoblastoma-related protein (1005 aa).

The interval 404–605 is domain A; the sequence is TPVSTAMTTA…EKGSSMYNSL (202 aa). Residues 404 to 853 are pocket; the sequence is TPVSTAMTTA…NEIFIPSVKP (450 aa). The segment at 606–722 is spacer; that stretch reads TIARPNLSNE…HPTRGETCAE (117 aa). The interval 723–853 is domain B; that stretch reads TAVNLFFSKI…NEIFIPSVKP (131 aa). Polar residues predominate over residues 863–873; it reads VPKNPNNQVSE. Residues 863–899 are disordered; the sequence is VPKNPNNQVSETNKKDESGPCPCPGSPKVSSFPSLPD.

This sequence belongs to the retinoblastoma protein (RB) family.

It localises to the nucleus. Functionally, regulator of biological processes that recruits a histone deacetylase to control gene transcription. May play a role in the entry into mitosis, negatively regulating the cell proliferation. Formation of stable complexes with geminiviridae replication-associated proteins may create a cellular environment which favors viral DNA replication. The chain is Retinoblastoma-related protein (RBR) from Pilosella piloselloides (Glaucous king-devil hawkweed).